The primary structure comprises 604 residues: ATP-dependent RNA helicase DED1 (604 aa).

Residues 1-19 (MAELSEQVQNLSINDNNEN) are compositionally biased toward polar residues. Residues 1 to 55 (MAELSEQVQNLSINDNNENGYVPPHLRGKPRSARNNSSNYNNNNGGYNGGRGGGS) are disordered. An N-acetylalanine modification is found at Ala2. The span at 34–45 (RNNSSNYNNNNG) shows a compositional bias: low complexity. Positions 46–55 (GYNGGRGGGS) are enriched in gly residues. Omega-N-methylarginine is present on Arg51. Arg62 bears the Dimethylated arginine; alternate mark. The residue at position 62 (Arg62) is an Omega-N-methylarginine; alternate. Over residues 67–76 (NGGFFGGNNG) the composition is skewed to gly residues. The tract at residues 67–94 (NGGFFGGNNGGSRSNGRSGGRWIDGKHV) is disordered. Positions 142-170 (TEFTSPPLDGLLLENIKLARFTKPTPVQK) match the Q motif motif. Lys158 participates in a covalent cross-link: Glycyl lysine isopeptide (Lys-Gly) (interchain with G-Cter in ubiquitin). The region spanning 173–362 (VPIVANGRDL…RDFLSDYIFL (190 aa)) is the Helicase ATP-binding domain. 186–193 (AQTGSGKT) is a binding site for ATP. A phosphoserine mark is found at Ser215, Ser218, and Ser263. Positions 306–309 (DEAD) match the DEAD box motif. Residues 373 to 533 (NITQKVLYVE…EVPSFLKDAM (161 aa)) enclose the Helicase C-terminal domain. Residues 533–604 (MMSAPGSRSN…SGGSNNSSWW (72 aa)) form a disordered region. 3 positions are modified to phosphoserine: Ser535, Ser539, and Ser543. Position 545 is a dimethylated arginine; alternate (Arg545). Arg545 is modified (omega-N-methylarginine; alternate). Phosphoserine occurs at positions 572 and 576. Position 578 is an omega-N-methylarginine (Arg578). The span at 584-604 (GSDSKSSGWGNSGGSNNSSWW) shows a compositional bias: low complexity. Ser598 carries the phosphoserine modification.

It belongs to the DEAD box helicase family. DDX3/DED1 subfamily. Interacts with the L-A virus GAG protein and the whole L-A virus particles.

It is found in the cytoplasm. The catalysed reaction is ATP + H2O = ADP + phosphate + H(+). Its function is as follows. ATP-binding RNA helicase involved in translation initiation. Remodels RNA in response to ADP and ATP concentrations by facilitating disruption, but also formation of RNA duplexes. Has weak ATP-dependent affinity for dsRNA, but strong ATP-dependent affinity for ssRNA. Acts as a virus host factor involved in the replication of the MBV and the L-A viruses by promoting the negative-strand RNA synthesis. May be involved in recognition of the preinitiation complex and DNA binding of the RNA polymerase III and play a role in mRNA splicing. The protein is ATP-dependent RNA helicase DED1 of Saccharomyces cerevisiae (strain ATCC 204508 / S288c) (Baker's yeast).